The sequence spans 361 residues: RuBisCO accumulation factor 1 (361 aa).

The tract at residues N16–D197 is N-terminal alpha-helix. Positions P221–I347 are C-terminal beta-sheet.

The protein belongs to the RAF family. In terms of assembly, homodimer. Forms an RbcL(8)-Raf1(8) complex. Each Raf1 dimer clamps the exterior of an RbcL dimer, protecting it. The extreme C-terminus (residues 354-361) inserts into the catalytic pocket of RbcL where the Glu-361 forms a salt bridge with 'Lys-202'. This insertion probably contributes to the assembly of RbcL(8). Forms complexes of many stoichiometries with RbcL with and without RbcS. RbcX and Raf1 can bind simultaneously to RbcL.

Its subcellular location is the cytoplasm. Functionally, a major RuBisCO chaperone. Acts after GroEL-GroES chaperonin to fold and/or assemble the large subunit of RuBisCO (ccbL, rbcL). Cooperates with RbcX in RbcL folding, plays the major role in assembly of dimers into RbcL(8)-Raf1(8) intermediate complexes. RbcS replaces Raf1, leading to holoenzyme formation. In terms of biological role, in vitro acts as an antagonist to CcmM35, suggesting it might regulate RuBisCO condensation and decondensation. The polypeptide is RuBisCO accumulation factor 1 (Nostoc sp. (strain PCC 7120 / SAG 25.82 / UTEX 2576)).